The primary structure comprises 369 residues: Glycine oxidase (369 aa).

FAD-binding positions include 14 to 15 (II), 34 to 35 (ES), 42 to 43 (AT), 47 to 49 (AGM), and valine 174. The substrate site is built by arginine 302 and arginine 329. 327–333 (HFRNGIL) provides a ligand contact to FAD.

It belongs to the DAO family. ThiO subfamily. In terms of assembly, homotetramer. Requires FAD as cofactor.

The enzyme catalyses glycine + O2 + H2O = glyoxylate + H2O2 + NH4(+). It catalyses the reaction glyphosate + O2 + H2O = aminomethylphosphonate + glyoxylate + H2O2 + H(+). The catalysed reaction is N-ethylglycine + O2 + H2O = ethylamine + glyoxylate + H2O2. It carries out the reaction sarcosine + O2 + H2O = methylamine + glyoxylate + H2O2. The enzyme catalyses D-alanine + O2 + H2O = pyruvate + H2O2 + NH4(+). It participates in cofactor biosynthesis; thiamine diphosphate biosynthesis. Catalyzes the FAD-dependent oxidative deamination of glycine, leading to glyoxylate, ammonia and hydrogen peroxide. Is also able to act on various amines and D-amino acids to yield the corresponding alpha-keto acids, ammonia/amine, and hydrogen peroxide. Can also oxidize the herbicide glyphosate (N-phosphonomethylglycine), and thus may be involved in the degradation pathway that allows B.licheniformis J33-8 to grow with glyphosate as the sole source of carbon. Is essential for thiamine biosynthesis since the oxidation of glycine catalyzed by ThiO generates the glycine imine intermediate (dehydroglycine) required for the biosynthesis of the thiazole ring of thiamine pyrophosphate. The sequence is that of Glycine oxidase from Bacillus licheniformis.